We begin with the raw amino-acid sequence, 127 residues long: Fluoride-specific ion channel FluC (127 aa).

Helical transmembrane passes span 4–24 (LLLA…LLSM), 35–55 (LGTL…FAWF), 71–91 (TGFC…VFLL), and 103–123 (VFVN…LFSA). Na(+) contacts are provided by glycine 75 and threonine 78.

This sequence belongs to the fluoride channel Fluc/FEX (TC 1.A.43) family.

Its subcellular location is the cell inner membrane. The enzyme catalyses fluoride(in) = fluoride(out). Na(+) is not transported, but it plays an essential structural role and its presence is essential for fluoride channel function. In terms of biological role, fluoride-specific ion channel. Important for reducing fluoride concentration in the cell, thus reducing its toxicity. In Escherichia coli O8 (strain IAI1), this protein is Fluoride-specific ion channel FluC.